A 220-amino-acid chain; its full sequence is Deoxyribose-phosphate aldolase 1 (220 aa).

Aspartate 89 (proton donor/acceptor) is an active-site residue. Lysine 151 (schiff-base intermediate with acetaldehyde) is an active-site residue. Lysine 180 serves as the catalytic Proton donor/acceptor.

It belongs to the DeoC/FbaB aldolase family. DeoC type 1 subfamily.

It is found in the cytoplasm. It carries out the reaction 2-deoxy-D-ribose 5-phosphate = D-glyceraldehyde 3-phosphate + acetaldehyde. The protein operates within carbohydrate degradation; 2-deoxy-D-ribose 1-phosphate degradation; D-glyceraldehyde 3-phosphate and acetaldehyde from 2-deoxy-alpha-D-ribose 1-phosphate: step 2/2. Its function is as follows. Catalyzes a reversible aldol reaction between acetaldehyde and D-glyceraldehyde 3-phosphate to generate 2-deoxy-D-ribose 5-phosphate. This is Deoxyribose-phosphate aldolase 1 from Staphylococcus aureus (strain MSSA476).